We begin with the raw amino-acid sequence, 131 residues long: uncharacterized protein (131 aa).

A disordered region spans residues 112-131 (LTDNPGAVRKSQKSLIPPYN).

This is an uncharacterized protein from Fowl adenovirus A serotype 1 (strain CELO / Phelps) (FAdV-1).